Consider the following 214-residue polypeptide: Adenylate kinase (214 aa).

Residue 10–15 (GAGKGT) participates in ATP binding. The tract at residues 30–59 (STGDMFRDHKARGTEIGKQVQAIMDGGGLV) is NMP. AMP-binding positions include Thr31, Arg36, 57–59 (GLV), 85–88 (GYPR), and Gln92. The LID stretch occupies residues 126-163 (GRRSCPRCGAVYHVSQNPPRRAGYCDRDDAELVQREDD). Arg127 provides a ligand contact to ATP. 2 residues coordinate Zn(2+): Cys130 and Cys133. An ATP-binding site is contributed by 136-137 (VY). The Zn(2+) site is built by Cys150 and Asp153. Arg160 and Arg171 together coordinate AMP. Residue Gly199 participates in ATP binding.

It belongs to the adenylate kinase family. In terms of assembly, monomer.

The protein localises to the cytoplasm. It carries out the reaction AMP + ATP = 2 ADP. The protein operates within purine metabolism; AMP biosynthesis via salvage pathway; AMP from ADP: step 1/1. In terms of biological role, catalyzes the reversible transfer of the terminal phosphate group between ATP and AMP. Plays an important role in cellular energy homeostasis and in adenine nucleotide metabolism. The polypeptide is Adenylate kinase (Anaeromyxobacter dehalogenans (strain 2CP-C)).